The chain runs to 24 residues: Aldehyde dehydrogenase gamma chain (24 aa).

In terms of assembly, heterotrimer composed of an alpha, a beta and a gamma chain. Requires [2Fe-2S] cluster as cofactor.

It carries out the reaction an aldehyde + a quinone + H2O = a quinol + a carboxylate + H(+). This Comamonas testosteroni (Pseudomonas testosteroni) protein is Aldehyde dehydrogenase gamma chain.